Here is a 172-residue protein sequence, read N- to C-terminus: Ribosome maturation factor RimM (172 aa).

The PRC barrel domain occupies 96–168; it reads EGEFYYHEII…RVDVEIPEGL (73 aa).

Belongs to the RimM family. As to quaternary structure, binds ribosomal protein uS19.

It is found in the cytoplasm. An accessory protein needed during the final step in the assembly of 30S ribosomal subunit, possibly for assembly of the head region. Essential for efficient processing of 16S rRNA. May be needed both before and after RbfA during the maturation of 16S rRNA. It has affinity for free ribosomal 30S subunits but not for 70S ribosomes. The polypeptide is Ribosome maturation factor RimM (Streptococcus gordonii (strain Challis / ATCC 35105 / BCRC 15272 / CH1 / DL1 / V288)).